The sequence spans 225 residues: Ras-related protein Rab-32 (225 aa).

Residue A2 is modified to N-acetylalanine. The GTP site is built by V36, G37, K38, T39, S40, S51, Q52, Y54, and T57. T39 is a binding site for Mg(2+). Positions 48–62 match the Switch 1 motif; the sequence is QLFSQHYRATIGVDF. T57 is a binding site for Mg(2+). At S71 the chain carries Phosphoserine. D81 lines the Mg(2+) pocket. GTP-binding residues include G84, N143, K144, D146, A175, and K176. The short motif at 84 to 97 is the Switch 2 element; that stretch reads GQERFGNMTRVYYK. Residues 178-197 form a PKA-RII subunit binding domain region; the sequence is NINIEEAARFLVEKILVNHQ. S-geranylgeranyl cysteine attachment occurs at residues C224 and C225.

Belongs to the small GTPase superfamily. Rab family. In terms of assembly, interacts with ANKRD27. A decreased interaction with ANKRD27 seen in the presence of SGSM2. Interacts with LRRK2 (via N-terminus); this interaction results in stimulation of RAB10 phosphorylation by LRRK2. Mg(2+) serves as cofactor. In terms of tissue distribution, widely expressed with high levels in heart, liver, kidney, bone marrow, testis, colon and fetal lung.

It localises to the mitochondrion. Its subcellular location is the mitochondrion outer membrane. The protein localises to the cytoplasmic vesicle. It is found in the phagosome. The protein resides in the phagosome membrane. It localises to the melanosome. Its subcellular location is the melanosome membrane. It catalyses the reaction GTP + H2O = GDP + phosphate + H(+). With respect to regulation, regulated by guanine the nucleotide exchange factor (GEF) BLOC-3 complex composed of HPS1 and HPS4 which promote the exchange of bound GDP for free GTP. Regulated by the GTPase activating protein (GAP) SGSM2/RUTBC1 which increases the GTP hydrolysis activity. Inhibited by GDP dissociation inhibitors (GDIs) which prevent Rab-GDP dissociation. In terms of biological role, the small GTPases Rab are key regulators of intracellular membrane trafficking, from the formation of transport vesicles to their fusion with membranes. Rabs cycle between an inactive GDP-bound form and an active GTP-bound form that is able to recruit to membranes different set of downstream effectors directly responsible for vesicle formation, movement, tethering and fusion. Also acts as an A-kinase anchoring protein by binding to the type II regulatory subunit of protein kinase A and anchoring it to the mitochondrion. Also involved in synchronization of mitochondrial fission. Plays a role in the maturation of phagosomes that engulf pathogens, such as S.aureus and M.tuberculosis. Plays an important role in the control of melanin production and melanosome biogenesis. In concert with RAB38, regulates the proper trafficking of melanogenic enzymes TYR, TYRP1 and DCT/TYRP2 to melanosomes in melanocytes. Stimulates phosphorylation of RAB10 'Thr-73' by LRRK2. This Homo sapiens (Human) protein is Ras-related protein Rab-32.